The primary structure comprises 252 residues: CLAVATA3/ESR (CLE)-related protein 4A-2 (252 aa).

The first 21 residues, 1–21 (MAKNAMLCLLILRVVLALAFA), serve as a signal peptide directing secretion. Positions 21–83 (ATNKKGDEEP…SNQLPNNNWM (63 aa)) are required for secretion from the host cytoplasm to the host apoplasm. Asn32 is a glycosylation site (N-linked (GlcNAc...) asparagine). Residues 116–252 (RKTGMHSQRH…APAGPDPIHH (137 aa)) are disordered. Composition is skewed to basic and acidic residues over residues 125–137 (HHEETTLEQEKRV), 144–179 (PIHHQDTTLEQEKRAVPAGPDPKHHEETTLEQEKRV), 186–200 (PIHHQDTTLEQEKRA), and 207–242 (PTHHEETTLEQEKRAVPAGPDPKHHEETTFEQEKRG). Residues 127-135 (EETTLEQEK) form an A-1 repeat. Positions 127–219 (EETTLEQEKR…HEETTLEQEK (93 aa)) are 6 X approximate repeat A. Residues 136–147 (RVAGAGPDPIHH) form a CLE-1 repeat. The tract at residues 136–252 (RVAGAGPDPI…APAGPDPIHH (117 aa)) is 6 X approximate repeat CLE. The stretch at 148-156 (QDTTLEQEK) is one A-2 repeat. A CLE-2 repeat occupies 157-168 (RAVPAGPDPKHH). The A-3 repeat unit spans residues 169–177 (EETTLEQEK). The stretch at 178–189 (RVAGAGPDPIHH) is one CLE-3 repeat. Residues 190–198 (QDTTLEQEK) form an A-4 repeat. One copy of the CLE-4 repeat lies at 199 to 210 (RAVPAGPDPTHH). The stretch at 211 to 219 (EETTLEQEK) is one A-5 repeat. A CLE-5 repeat occupies 220-231 (RAVPAGPDPKHH). Residues 232-240 (EETTFEQEK) form an A-6 repeat. Residues 241–252 (RGAPAGPDPIHH) form a CLE-6 repeat.

Belongs to the CLV3/ESR signal peptide family. As to expression, highly expressed exclusively within the dorsal esophageal gland cell during syncytium formation in host plants.

The protein resides in the secreted. The protein localises to the host cytoplasm. Its subcellular location is the host extracellular space. It is found in the extracellular space. It localises to the apoplast. In terms of biological role, mimics host plant CLE extracellular signal peptides that regulate cell fate. May play a role in the differentiation or division of feeding cells (syncytia) induced in plant roots during infection. The polypeptide is CLAVATA3/ESR (CLE)-related protein 4A-2 (CLE-4A-2) (Globodera rostochiensis (Golden nematode worm)).